Consider the following 146-residue polypeptide: Putative esterase DR_2321 (146 aa).

This sequence belongs to the thioesterase PaaI family.

The sequence is that of Putative esterase DR_2321 from Deinococcus radiodurans (strain ATCC 13939 / DSM 20539 / JCM 16871 / CCUG 27074 / LMG 4051 / NBRC 15346 / NCIMB 9279 / VKM B-1422 / R1).